We begin with the raw amino-acid sequence, 309 residues long: Porphobilinogen deaminase (309 aa).

Cys-243 carries the S-(dipyrrolylmethanemethyl)cysteine modification.

It belongs to the HMBS family. As to quaternary structure, monomer. It depends on dipyrromethane as a cofactor.

It catalyses the reaction 4 porphobilinogen + H2O = hydroxymethylbilane + 4 NH4(+). The protein operates within porphyrin-containing compound metabolism; protoporphyrin-IX biosynthesis; coproporphyrinogen-III from 5-aminolevulinate: step 2/4. Tetrapolymerization of the monopyrrole PBG into the hydroxymethylbilane pre-uroporphyrinogen in several discrete steps. The chain is Porphobilinogen deaminase (hemC) from Deinococcus radiodurans (strain ATCC 13939 / DSM 20539 / JCM 16871 / CCUG 27074 / LMG 4051 / NBRC 15346 / NCIMB 9279 / VKM B-1422 / R1).